Here is a 367-residue protein sequence, read N- to C-terminus: Flagellar P-ring protein (367 aa).

The first 22 residues, 1–22 (MRRMLVIRWILAIHLIATQVFA), serve as a signal peptide directing secretion.

The protein belongs to the FlgI family. The basal body constitutes a major portion of the flagellar organelle and consists of four rings (L,P,S, and M) mounted on a central rod.

It localises to the periplasm. It is found in the bacterial flagellum basal body. Its function is as follows. Assembles around the rod to form the L-ring and probably protects the motor/basal body from shearing forces during rotation. This Legionella pneumophila subsp. pneumophila (strain Philadelphia 1 / ATCC 33152 / DSM 7513) protein is Flagellar P-ring protein.